We begin with the raw amino-acid sequence, 1029 residues long: 2-oxoglutarate dehydrogenase, mitochondrial (1029 aa).

5 residues coordinate thiamine diphosphate: Arg-317, Asp-415, Asn-448, Ile-450, and Gln-676. Mg(2+) is bound by residues Asp-415, Asn-448, and Ile-450.

It belongs to the alpha-ketoglutarate dehydrogenase family. As to quaternary structure, homodimer. Component of the 2-oxoglutarate dehydrogenase complex. The cofactor is thiamine diphosphate. Mg(2+) serves as cofactor.

It localises to the mitochondrion matrix. The catalysed reaction is N(6)-[(R)-lipoyl]-L-lysyl-[protein] + 2-oxoglutarate + H(+) = N(6)-[(R)-S(8)-succinyldihydrolipoyl]-L-lysyl-[protein] + CO2. The 2-oxoglutarate dehydrogenase complex catalyzes the overall conversion of 2-oxoglutarate to succinyl-CoA and CO(2). It contains multiple copies of three enzymatic components: 2-oxoglutarate dehydrogenase (E1), dihydrolipoamide succinyltransferase (E2) and lipoamide dehydrogenase (E3). The protein is 2-oxoglutarate dehydrogenase, mitochondrial (ogdh-1) of Caenorhabditis elegans.